Consider the following 1065-residue polypeptide: Inversin (1065 aa).

ANK repeat units lie at residues 13–42 (SLASQVHAAAVNGDKGALQRLIVGNSALKD), 47–76 (FGRTPLMYCVLADRLDCADALLKAGADVNK), 80–110 (SQRTALHLAAQKGNYRFMKLLLTRRANWMQK), 113–144 (EEMTPLHLTTRHRSPKCLALLLKFMAPGEVDT), 148–177 (NKQTALHWSAYYNNPEHVKLLIKHDSNIGI), 181–213 (EGKIPLHWAANHKDPSAVHTVRCILDAAPTESL), 220–250 (EGRTPLHFAVADGNVTVVDVLTSYESCNITS), 254–283 (LFRTPLHWAALLGHAQIVHLLLERNKSGTI), 288–317 (QGATPLHYAAQSNFAETVKVFLKHPSVKDD), 321–350 (EGRTSFMWAAGKGSDDVLRTMLSLKSDIDI), 356–385 (YGGTALHAAALSGHVSTVKLLLENNAQVDA), 389–418 (MKHTPLFRACEMGHKDVIQTLIKGGARVDL), 422–451 (DGHSLLHWAALGGNADVCQILIENKINPNV), 455–484 (AGRTPLQCAAYGGYINCMAVLMENNADPNI), 488–517 (EGRTALHWSCNNGYLDAIKLLLDFAAFPNQ), and 523–553 (ERYTPLDYALLGERHEVIQFMLEHGALSIAA). At asparagine 75 the chain carries 3-hydroxyasparagine. The D-box 1 signature appears at 490 to 498 (RTALHWSCN). In terms of domain architecture, IQ 1 spans 555–584 (QDIAAFKIQAVYKGYKVRKAFRDRKNLLMK). Residues 589–616 (RKDAAAKKREEENKRKEAEQQKGRRSPD) show a composition bias toward basic and acidic residues. 2 disordered regions span residues 589–833 (RKDA…TPRN) and 847–886 (HLPQSTEELRSGARRLETSTLSEDFQVSKETDPAPGPLSG). The span at 627–640 (PSTQDVPSRQSRAP) shows a compositional bias: polar residues. A Phosphoserine modification is found at serine 661. Polar residues predominate over residues 677–686 (SSDLQGTNSR). 6 stretches are compositionally biased toward basic and acidic residues: residues 687-697 (RPNETAREHSK), 706-715 (RPNEGSDGSR), 723-736 (EKSRGETAGDERCA), 752-762 (GPDEKGEDSRR), 770-786 (HDSHWKPSRRHDTEPKA), and 853-863 (EELRSGARRLE). Positions 909–917 (RKELFRKKN) match the D-box 2 motif. Positions 916-945 (KNKAAAVIQRAWRSYQLRKHLSHLRHMKQL) constitute an IQ 2 domain. Positions 976 to 999 (TTAVSKAPKSPSKGTSGTKSTKHS) are disordered. Positions 983–994 (PKSPSKGTSGTK) are enriched in low complexity.

As to quaternary structure, binds calmodulin via its IQ domains. Interacts with APC2. Interacts with alpha-, beta-, and gamma-catenin. Interacts with N-cadherin (CDH2). Interacts with microtubules. Interacts with NPHP1. Interacts with DVL1, PRICKLE (PRICKLE1 or PRICKLE2) and Strabismus (VANGL1 or VANGL2). Interacts with IQCB1; the interaction likely requires additional interactors. Component of a complex containing at least ANKS6, INVS, NEK8 and NPHP3. ANKS6 may organize complex assembly by linking INVS and NPHP3 to NEK8 and INVS may target the complex to the proximal ciliary axoneme. In terms of processing, may be ubiquitinated via its interaction with APC2. Hydroxylated at Asn-75, most probably by HIF1AN. As to expression, widely expressed. Strongly expressed in the primary cilia of renal tubular cells.

It localises to the cytoplasm. The protein localises to the cytoskeleton. It is found in the spindle. The protein resides in the membrane. Its subcellular location is the nucleus. It localises to the cell projection. The protein localises to the cilium. Required for normal renal development and establishment of left-right axis. Probably acts as a molecular switch between different Wnt signaling pathways. Inhibits the canonical Wnt pathway by targeting cytoplasmic disheveled (DVL1) for degradation by the ubiquitin-proteasome. This suggests that it is required in renal development to oppose the repression of terminal differentiation of tubular epithelial cells by Wnt signaling. Involved in the organization of apical junctions in kidney cells together with NPHP1, NPHP4 and RPGRIP1L/NPHP8. Does not seem to be strictly required for ciliogenesis. The polypeptide is Inversin (INVS) (Homo sapiens (Human)).